The primary structure comprises 451 residues: tRNA modification GTPase MnmE (451 aa).

Residues R23, E80, and K119 each contribute to the (6S)-5-formyl-5,6,7,8-tetrahydrofolate site. The 158-residue stretch at 215 to 372 (GIKVVLAGQP…LRAALLKTAG (158 aa)) folds into the TrmE-type G domain. K(+) is bound at residue N225. GTP-binding positions include 225–230 (NVGKSS), 244–250 (TDIPGTT), and 269–272 (DTAG). S229 is a binding site for Mg(2+). Positions 244, 246, and 249 each coordinate K(+). Mg(2+) is bound at residue T250. K451 serves as a coordination point for (6S)-5-formyl-5,6,7,8-tetrahydrofolate.

This sequence belongs to the TRAFAC class TrmE-Era-EngA-EngB-Septin-like GTPase superfamily. TrmE GTPase family. As to quaternary structure, homodimer. Heterotetramer of two MnmE and two MnmG subunits. The cofactor is K(+).

The protein resides in the cytoplasm. In terms of biological role, exhibits a very high intrinsic GTPase hydrolysis rate. Involved in the addition of a carboxymethylaminomethyl (cmnm) group at the wobble position (U34) of certain tRNAs, forming tRNA-cmnm(5)s(2)U34. In Nitrosomonas europaea (strain ATCC 19718 / CIP 103999 / KCTC 2705 / NBRC 14298), this protein is tRNA modification GTPase MnmE.